The sequence spans 465 residues: Cysteine--tRNA ligase (465 aa).

Zn(2+) is bound at residue C27. The short motif at P29–N39 is the 'HIGH' region element. 3 residues coordinate Zn(2+): C207, H232, and E236. The short motif at K264 to S268 is the 'KMSKS' region element. An ATP-binding site is contributed by K267.

Belongs to the class-I aminoacyl-tRNA synthetase family. As to quaternary structure, monomer. Zn(2+) is required as a cofactor.

Its subcellular location is the cytoplasm. It catalyses the reaction tRNA(Cys) + L-cysteine + ATP = L-cysteinyl-tRNA(Cys) + AMP + diphosphate. The sequence is that of Cysteine--tRNA ligase from Clostridium botulinum (strain Langeland / NCTC 10281 / Type F).